We begin with the raw amino-acid sequence, 215 residues long: MKILVTGFDPFGDDKINPAIEAVKRLPDEIAGAQIVKLEIPTKFNVSADVVKDAIAKEKPDYVLSIGQAGGRFELTPERVAINLDDGRIQDNAGYQPLNHTIHGDGENAYFTQLPIKAMAKAIREAGVPAAVSNTAGTYVCNHIFYQVQYMRDKMFPDIKAGFMHIPFLPEQVVTRPETPALSLDDDVLGITAAIRAIVSRDGKGDIETIEGKNH.

Catalysis depends on residues glutamate 78, cysteine 141, and histidine 165.

Belongs to the peptidase C15 family. Homotetramer.

Its subcellular location is the cytoplasm. It catalyses the reaction Release of an N-terminal pyroglutamyl group from a polypeptide, the second amino acid generally not being Pro.. Its function is as follows. Removes 5-oxoproline from various penultimate amino acid residues except L-proline. The polypeptide is Pyrrolidone-carboxylate peptidase (Lacticaseibacillus paracasei (strain ATCC 334 / BCRC 17002 / CCUG 31169 / CIP 107868 / KCTC 3260 / NRRL B-441) (Lactobacillus paracasei)).